The following is a 319-amino-acid chain: MNNTKKRGVLLVNLGTPEEATAPAVKRFLSQFLHDQRVVDMTRWLWCPILHGIILPIRSPKVAKLYQTVWMKEGSPLMVYSKRQQVELQAKLNCPVEIGMTYGTPSVLDGVNKLQAQGVDEICVLPLYPQYSGTTTGAAYDALAHALRKVAVVPSIQFIRDYHDHPLYIKALAESVRQSWQVQGKGDYLLCSYHGIPQRYADNGDVYPLHCEMTTELLRLELGLDKSQIGTTYQSRFGREEWLQPYTDKTLESLPAKGIKSLDVITPAFSVDCLETLEEISEQGQESFLHAGGEQYRFIPCLNDAPSHIEMMARLVTER.

Fe cation is bound by residues His194 and Glu275.

The protein belongs to the ferrochelatase family.

It is found in the cytoplasm. It carries out the reaction heme b + 2 H(+) = protoporphyrin IX + Fe(2+). The protein operates within porphyrin-containing compound metabolism; protoheme biosynthesis; protoheme from protoporphyrin-IX: step 1/1. Functionally, catalyzes the ferrous insertion into protoporphyrin IX. The protein is Ferrochelatase of Vibrio vulnificus (strain CMCP6).